Consider the following 529-residue polypeptide: Bifunctional purine biosynthesis protein PurH (529 aa).

One can recognise an MGS-like domain in the interval 2–148 (QHLRPIRRAL…KNHKDVTIVV (147 aa)).

This sequence belongs to the PurH family.

It carries out the reaction (6R)-10-formyltetrahydrofolate + 5-amino-1-(5-phospho-beta-D-ribosyl)imidazole-4-carboxamide = 5-formamido-1-(5-phospho-D-ribosyl)imidazole-4-carboxamide + (6S)-5,6,7,8-tetrahydrofolate. It catalyses the reaction IMP + H2O = 5-formamido-1-(5-phospho-D-ribosyl)imidazole-4-carboxamide. The protein operates within purine metabolism; IMP biosynthesis via de novo pathway; 5-formamido-1-(5-phospho-D-ribosyl)imidazole-4-carboxamide from 5-amino-1-(5-phospho-D-ribosyl)imidazole-4-carboxamide (10-formyl THF route): step 1/1. It functions in the pathway purine metabolism; IMP biosynthesis via de novo pathway; IMP from 5-formamido-1-(5-phospho-D-ribosyl)imidazole-4-carboxamide: step 1/1. The protein is Bifunctional purine biosynthesis protein PurH of Proteus mirabilis (strain HI4320).